Reading from the N-terminus, the 333-residue chain is UDP-N-acetylglucosamine 4,6-dehydratase (inverting) (333 aa).

NADP(+)-binding positions include 19-22 (TGSF), 43-48 (SRDELK), 67-68 (DV), Ala87, Lys91, and 129-130 (LS). Lys91 lines the substrate pocket. The active site involves Lys133. Residues Tyr141 and Lys145 each contribute to the NADP(+) site. Asn173 contacts substrate. 174–178 (VVGSR) is an NADP(+) binding site. The substrate site is built by Val181, Thr199, Arg258, and Glu261.

The protein belongs to the polysaccharide synthase family. As to quaternary structure, homohexamer. Requires NADP(+) as cofactor.

The catalysed reaction is UDP-N-acetyl-alpha-D-glucosamine = UDP-2-acetamido-2,6-dideoxy-beta-L-arabino-hex-4-ulose + H2O. Catalyzes the first step in the biosynthesis of pseudaminic acid, a sialic-acid-like sugar that is used to modify flagellin. Has both C6 dehydratase and C5 epimerase activities that result in the production of both UDP-2-acetamido-2,6-dideoxy-beta-L-arabino-4-hexulose and UDP-2-acetamido-2,6-dideoxy-alpha-D-xylo-4-hexulose. The sequence is that of UDP-N-acetylglucosamine 4,6-dehydratase (inverting) (pseB) from Helicobacter pylori (strain ATCC 700392 / 26695) (Campylobacter pylori).